The primary structure comprises 204 residues: Holliday junction branch migration complex subunit RuvA (204 aa).

Positions 1 to 64 (MIGRLQGILL…EDAHLLFGFA (64 aa)) are domain I. The tract at residues 65–143 (QKTDRTLFRE…GVKQSDFFVE (79 aa)) is domain II. The tract at residues 144-155 (STHIPLSPSIES) is flexible linker. A domain III region spans residues 156–204 (HSESSSDEAISALIALGYKPVEAEKMVKRVAKPELTSEQVIREALKAAL).

Belongs to the RuvA family. In terms of assembly, homotetramer. Forms an RuvA(8)-RuvB(12)-Holliday junction (HJ) complex. HJ DNA is sandwiched between 2 RuvA tetramers; dsDNA enters through RuvA and exits via RuvB. An RuvB hexamer assembles on each DNA strand where it exits the tetramer. Each RuvB hexamer is contacted by two RuvA subunits (via domain III) on 2 adjacent RuvB subunits; this complex drives branch migration. In the full resolvosome a probable DNA-RuvA(4)-RuvB(12)-RuvC(2) complex forms which resolves the HJ.

Its subcellular location is the cytoplasm. Its function is as follows. The RuvA-RuvB-RuvC complex processes Holliday junction (HJ) DNA during genetic recombination and DNA repair, while the RuvA-RuvB complex plays an important role in the rescue of blocked DNA replication forks via replication fork reversal (RFR). RuvA specifically binds to HJ cruciform DNA, conferring on it an open structure. The RuvB hexamer acts as an ATP-dependent pump, pulling dsDNA into and through the RuvAB complex. HJ branch migration allows RuvC to scan DNA until it finds its consensus sequence, where it cleaves and resolves the cruciform DNA. The polypeptide is Holliday junction branch migration complex subunit RuvA (Haemophilus influenzae (strain PittEE)).